The chain runs to 281 residues: MVNEKKMLPKRIILMRHGESAGNIDAGAYATTPDHKIPLTEEGRAQAREAGKKMRALISTQSGGACGENWRVYFYVSPYERTRTTLREVGKGFSRKRVIGVREECRIREQDFGNFQVEERMRVVKETRERFGRFFYRFPEGESAADVYDRVSSFLESMWRDVDMNRHQVDPSSELNLVIVSHGLTSRVFLTKWFKWTVAEFERLNNFGNCEFRVMELGASGEYTFAIHHSEEEMLDWGMSKDMIDDQKDRVDGCRVTTSNDSCSLHLNEYFDLLDVTDDEE.

His17 functions as the Tele-phosphohistidine intermediate in the catalytic mechanism. The Proton donor/acceptor role is filled by Glu109.

The protein belongs to the phosphoglycerate mutase family.

In terms of biological role, may play a role in carbohydrates metabolism. This Arabidopsis thaliana (Mouse-ear cress) protein is Phosphoglycerate mutase-like protein AT74H.